Reading from the N-terminus, the 456-residue chain is Bestrophin homolog 18 (456 aa).

A run of 4 helical transmembrane segments spans residues 29–49, 83–103, 234–254, and 267–287; these read WSAI…VSAI, GFFI…IGFI, IIYP…GILA, and MIDL…MGWL. Positions 416–456 are disordered; it reads ASSSRSLERQRSPGSFRMETLTPGSPTNTPIEPIDKIDKKK.

This sequence belongs to the anion channel-forming bestrophin (TC 1.A.46) family. Calcium-sensitive chloride channel subfamily. As to quaternary structure, forms oligomers.

The protein resides in the cell membrane. In terms of biological role, forms chloride channels. The polypeptide is Bestrophin homolog 18 (best-18) (Caenorhabditis elegans).